The chain runs to 146 residues: D-aminoacyl-tRNA deacylase (146 aa).

Positions 137 to 138 match the Gly-cisPro motif, important for rejection of L-amino acids motif; it reads GP.

This sequence belongs to the DTD family. In terms of assembly, homodimer.

It is found in the cytoplasm. The enzyme catalyses glycyl-tRNA(Ala) + H2O = tRNA(Ala) + glycine + H(+). The catalysed reaction is a D-aminoacyl-tRNA + H2O = a tRNA + a D-alpha-amino acid + H(+). Its function is as follows. An aminoacyl-tRNA editing enzyme that deacylates mischarged D-aminoacyl-tRNAs. Also deacylates mischarged glycyl-tRNA(Ala), protecting cells against glycine mischarging by AlaRS. Acts via tRNA-based rather than protein-based catalysis; rejects L-amino acids rather than detecting D-amino acids in the active site. By recycling D-aminoacyl-tRNA to D-amino acids and free tRNA molecules, this enzyme counteracts the toxicity associated with the formation of D-aminoacyl-tRNA entities in vivo and helps enforce protein L-homochirality. This chain is D-aminoacyl-tRNA deacylase, found in Bacillus cereus (strain G9842).